The chain runs to 167 residues: Lipoprotein signal peptidase (167 aa).

The next 3 helical transmembrane spans lie at 10 to 30, 68 to 88, and 98 to 118; these read LIWLLLSIAIIALDQATKAWV, WQMWLFIALALGISGLLTFWL, and SALPYALIIGGGIGNVIDRFL. Residues D124 and D142 contribute to the active site. Residues 138–158 traverse the membrane as a helical segment; that stretch reads FNLADSAIVAGAIGIGLLSLF.

Belongs to the peptidase A8 family.

It is found in the cell inner membrane. It carries out the reaction Release of signal peptides from bacterial membrane prolipoproteins. Hydrolyzes -Xaa-Yaa-Zaa-|-(S,diacylglyceryl)Cys-, in which Xaa is hydrophobic (preferably Leu), and Yaa (Ala or Ser) and Zaa (Gly or Ala) have small, neutral side chains.. It functions in the pathway protein modification; lipoprotein biosynthesis (signal peptide cleavage). Functionally, this protein specifically catalyzes the removal of signal peptides from prolipoproteins. This chain is Lipoprotein signal peptidase, found in Xylella fastidiosa (strain M23).